Here is a 171-residue protein sequence, read N- to C-terminus: Interleukin-26 (171 aa).

The N-terminal stretch at 1-21 (MLVNFILRCGLLLVTLSLAIA) is a signal peptide.

Belongs to the IL-10 family. Homodimer. As to expression, expressed in HVS transformed T-cells but not other T-cell lines or primary stimulated T-cells. Expressed in colonic T-cells including Th17 inflammatory T-cells; the expression is significantly increased in serum of patients with Crohn's disease (at protein level).

It localises to the secreted. May play a role in local mechanisms of mucosal immunity and seems to have a pro-inflammatory function. May play a role in inflammatory bowel disease. Activates STAT1 and STAT3, MAPK1/3 (ERK1/2), JUN and AKT. Induces expression of SOCS3, TNF-alpha and IL-8, secretion of IL-8 and IL-10 and surface expression of ICAM1. Decreases proliferation of intestinal epithelial cells. Is inhibited by heparin. In Homo sapiens (Human), this protein is Interleukin-26 (IL26).